Here is a 159-residue protein sequence, read N- to C-terminus: ATP synthase subunit b 2 (159 aa).

Residues 1–21 (MDATFWAFIALVIFVVIVVYM) traverse the membrane as a helical segment.

Belongs to the ATPase B chain family. F-type ATPases have 2 components, F(1) - the catalytic core - and F(0) - the membrane proton channel. F(1) has five subunits: alpha(3), beta(3), gamma(1), delta(1), epsilon(1). F(0) has three main subunits: a(1), b(2) and c(10-14). The alpha and beta chains form an alternating ring which encloses part of the gamma chain. F(1) is attached to F(0) by a central stalk formed by the gamma and epsilon chains, while a peripheral stalk is formed by the delta and b chains.

The protein localises to the cell inner membrane. F(1)F(0) ATP synthase produces ATP from ADP in the presence of a proton or sodium gradient. F-type ATPases consist of two structural domains, F(1) containing the extramembraneous catalytic core and F(0) containing the membrane proton channel, linked together by a central stalk and a peripheral stalk. During catalysis, ATP synthesis in the catalytic domain of F(1) is coupled via a rotary mechanism of the central stalk subunits to proton translocation. In terms of biological role, component of the F(0) channel, it forms part of the peripheral stalk, linking F(1) to F(0). The sequence is that of ATP synthase subunit b 2 from Brucella canis (strain ATCC 23365 / NCTC 10854 / RM-666).